Reading from the N-terminus, the 375-residue chain is Queuine tRNA-ribosyltransferase (375 aa).

Asp89 acts as the Proton acceptor in catalysis. Substrate contacts are provided by residues 89–93 (DSGGF), Asp143, Gln187, and Gly214. The segment at 245–251 (GVGKPED) is RNA binding. Asp264 functions as the Nucleophile in the catalytic mechanism. The RNA binding; important for wobble base 34 recognition stretch occupies residues 269 to 273 (TRNAR). Zn(2+) contacts are provided by Cys302, Cys304, Cys307, and His333.

It belongs to the queuine tRNA-ribosyltransferase family. As to quaternary structure, homodimer. Within each dimer, one monomer is responsible for RNA recognition and catalysis, while the other monomer binds to the replacement base PreQ1. It depends on Zn(2+) as a cofactor.

The catalysed reaction is 7-aminomethyl-7-carbaguanine + guanosine(34) in tRNA = 7-aminomethyl-7-carbaguanosine(34) in tRNA + guanine. It participates in tRNA modification; tRNA-queuosine biosynthesis. Functionally, catalyzes the base-exchange of a guanine (G) residue with the queuine precursor 7-aminomethyl-7-deazaguanine (PreQ1) at position 34 (anticodon wobble position) in tRNAs with GU(N) anticodons (tRNA-Asp, -Asn, -His and -Tyr). Catalysis occurs through a double-displacement mechanism. The nucleophile active site attacks the C1' of nucleotide 34 to detach the guanine base from the RNA, forming a covalent enzyme-RNA intermediate. The proton acceptor active site deprotonates the incoming PreQ1, allowing a nucleophilic attack on the C1' of the ribose to form the product. After dissociation, two additional enzymatic reactions on the tRNA convert PreQ1 to queuine (Q), resulting in the hypermodified nucleoside queuosine (7-(((4,5-cis-dihydroxy-2-cyclopenten-1-yl)amino)methyl)-7-deazaguanosine). The polypeptide is Queuine tRNA-ribosyltransferase (Salmonella typhi).